The primary structure comprises 363 residues: Replication factor C subunit 4 (363 aa).

At Met1 the chain carries N-acetylmethionine. The tract at residues 1–36 is disordered; that stretch reads MQAFLKGTSISTKPPLTKDRGVAASAGSSGENKKAK. An N6-acetyllysine mark is found at Lys6 and Lys13. Position 78 to 85 (78 to 85) interacts with ATP; sequence GPPGTGKT.

The protein belongs to the activator 1 small subunits family. Subunit of the RFC complex, an heteropentameric complex consisting of a large subunit RFC1 and four small subunits RFC2, RFC3, RFC4 and RFC5; the RFC complex interacts with PCNA. Forms an heterotetrameric complex with RFC2, RFC3 and RFC5; this complex has ATPase activity but is not stimulated by PCNA. The heterotetramer of subunits RFC2, RFC3, RFC4 and RFC5 interacts with RAD17. Interacts with ATAD5. Interacts with CTF18. Interacts with CNTD1; this interaction facilitates crossover formation.

Its subcellular location is the nucleus. Its function is as follows. Subunit of the replication factor C (RFC) complex which acts during elongation of primed DNA templates by DNA polymerases delta and epsilon, and is necessary for ATP-dependent loading of proliferating cell nuclear antigen (PCNA) onto primed DNA. The RFC4 subunit probably functions as a scaffold on which the other complex components can assemble. This is Replication factor C subunit 4 (RFC4) from Homo sapiens (Human).